A 238-amino-acid polypeptide reads, in one-letter code: Ribonuclease PH (238 aa).

Residues Arg-86 and 124–126 contribute to the phosphate site; that span reads GTR.

It belongs to the RNase PH family. Homohexameric ring arranged as a trimer of dimers.

The catalysed reaction is tRNA(n+1) + phosphate = tRNA(n) + a ribonucleoside 5'-diphosphate. Its function is as follows. Phosphorolytic 3'-5' exoribonuclease that plays an important role in tRNA 3'-end maturation. Removes nucleotide residues following the 3'-CCA terminus of tRNAs; can also add nucleotides to the ends of RNA molecules by using nucleoside diphosphates as substrates, but this may not be physiologically important. Probably plays a role in initiation of 16S rRNA degradation (leading to ribosome degradation) during starvation. The sequence is that of Ribonuclease PH from Shigella flexneri serotype 5b (strain 8401).